Consider the following 335-residue polypeptide: GTPase Obg (335 aa).

One can recognise an Obg domain in the interval 4–162 (GNFVDYTKIY…ADIVLELKVL (159 aa)). Residues 163-332 (ADVGLVGFPN…LKDKLWAMLN (170 aa)) form the OBG-type G domain. Residues 169–176 (GFPNAGKS), 194–198 (FTTLK), 216–219 (DIPG), 283–286 (SKCD), and 313–315 (SSI) contribute to the GTP site. Ser-176 and Thr-196 together coordinate Mg(2+).

Belongs to the TRAFAC class OBG-HflX-like GTPase superfamily. OBG GTPase family. As to quaternary structure, monomer. Mg(2+) is required as a cofactor.

The protein localises to the cytoplasm. Functionally, an essential GTPase which binds GTP, GDP and possibly (p)ppGpp with moderate affinity, with high nucleotide exchange rates and a fairly low GTP hydrolysis rate. Plays a role in control of the cell cycle, stress response, ribosome biogenesis and in those bacteria that undergo differentiation, in morphogenesis control. This chain is GTPase Obg, found in Flavobacterium psychrophilum (strain ATCC 49511 / DSM 21280 / CIP 103535 / JIP02/86).